Here is a 380-residue protein sequence, read N- to C-terminus: L-prolyl-[peptidyl-carrier protein] dehydrogenase (380 aa).

Glutamate 243 serves as the catalytic Proton acceptor. FAD-binding residues include arginine 269 and glutamine 280.

The protein belongs to the acyl-CoA dehydrogenase family. It depends on FAD as a cofactor.

It carries out the reaction L-prolyl-[peptidyl-carrier protein] + 2 oxidized [electron-transfer flavoprotein] + H(+) = (1H-pyrrole-2-carbonyl)-[peptidyl-carrier protein] + 2 reduced [electron-transfer flavoprotein]. Functionally, involved in the biosynthesis of pyoluteorin. Catalyzes the desaturation of the L-prolyl-[PltL] to yield 1H-pyrrole-2-carbonyl-[PltL]. The polypeptide is L-prolyl-[peptidyl-carrier protein] dehydrogenase (Pseudomonas fluorescens (strain ATCC BAA-477 / NRRL B-23932 / Pf-5)).